The primary structure comprises 211 residues: Uridine kinase (211 aa).

Glycine 12–threonine 19 contacts ATP.

It belongs to the uridine kinase family.

The protein resides in the cytoplasm. The enzyme catalyses uridine + ATP = UMP + ADP + H(+). It catalyses the reaction cytidine + ATP = CMP + ADP + H(+). Its pathway is pyrimidine metabolism; CTP biosynthesis via salvage pathway; CTP from cytidine: step 1/3. The protein operates within pyrimidine metabolism; UMP biosynthesis via salvage pathway; UMP from uridine: step 1/1. In Bacillus velezensis (strain DSM 23117 / BGSC 10A6 / LMG 26770 / FZB42) (Bacillus amyloliquefaciens subsp. plantarum), this protein is Uridine kinase.